Reading from the N-terminus, the 522-residue chain is Zinc finger protein C25B8.19c (522 aa).

Disordered regions lie at residues 1–25, 61–96, 235–265, 311–386, and 413–462; these read MSSD…LPTT, DPQA…SNSN, QRQS…QEVT, QPSS…HTLS, and NSAQ…STSS. The span at 84–96 shows a compositional bias: low complexity; it reads AGNTNTPTTSNSN. Composition is skewed to polar residues over residues 311-321 and 335-344; these read QPSSRDLQNHP and ASNTLNHANG. A compositionally biased stretch (low complexity) spans 345–362; the sequence is NQAENASESSTSQSNDSQ. Positions 413-427 are enriched in polar residues; it reads NSAQAHPMGQQSDSN. Over residues 428 to 438 the composition is skewed to basic and acidic residues; sequence YSDHHNNDKRA. Residues 453–462 show a composition bias toward low complexity; the sequence is SHTGSSSTSS. 2 C2H2-type zinc fingers span residues 468–495 and 496–522; these read YRCT…GERP and FVCD…IHGL.

The protein resides in the nucleus. This chain is Zinc finger protein C25B8.19c, found in Schizosaccharomyces pombe (strain 972 / ATCC 24843) (Fission yeast).